The following is a 163-amino-acid chain: uncharacterized protein (163 aa).

This is an uncharacterized protein from Mycoplasma pneumoniae (strain ATCC 29342 / M129 / Subtype 1) (Mycoplasmoides pneumoniae).